A 1740-amino-acid polypeptide reads, in one-letter code: DNA polymerase (1740 aa).

Positions Ile-472 to Asp-491 are disordered. Residues Asp-480–Asp-491 show a composition bias toward acidic residues. The DOD-type homing endonuclease domain occupies Val-1189 to Tyr-1334. Residues Pro-1673–Ile-1701 form a disordered region. A compositionally biased stretch (polar residues) spans Tyr-1685 to Gln-1700.

The protein belongs to the DNA polymerase type-B family. This protein undergoes a protein self splicing that involves a post-translational excision of the intervening region (intein) followed by peptide ligation.

The enzyme catalyses DNA(n) + a 2'-deoxyribonucleoside 5'-triphosphate = DNA(n+1) + diphosphate. The protein is DNA polymerase (POLB) of Acanthamoeba polyphaga (Amoeba).